A 112-amino-acid chain; its full sequence is CRISPR-associated endoribonuclease Cas2 2 (112 aa).

Asp15 serves as a coordination point for Mg(2+).

This sequence belongs to the CRISPR-associated endoribonuclease Cas2 protein family. As to quaternary structure, homodimer, forms a heterotetramer with a Cas1 homodimer. Mg(2+) is required as a cofactor.

CRISPR (clustered regularly interspaced short palindromic repeat), is an adaptive immune system that provides protection against mobile genetic elements (viruses, transposable elements and conjugative plasmids). CRISPR clusters contain sequences complementary to antecedent mobile elements and target invading nucleic acids. CRISPR clusters are transcribed and processed into CRISPR RNA (crRNA). Functions as a ssRNA-specific endoribonuclease. Involved in the integration of spacer DNA into the CRISPR cassette. The sequence is that of CRISPR-associated endoribonuclease Cas2 2 from Rhodospirillum rubrum (strain ATCC 11170 / ATH 1.1.1 / DSM 467 / LMG 4362 / NCIMB 8255 / S1).